Reading from the N-terminus, the 454-residue chain is ABSCISIC ACID-INSENSITIVE 5-like protein 6 (454 aa).

Phosphoserine is present on residues serine 32, serine 55, and serine 126. At threonine 169 the chain carries Phosphothreonine. The region spanning isoleucine 372–glutamine 435 is the bZIP domain. The segment at arginine 374–lysine 393 is basic motif. The segment at leucine 400–leucine 414 is leucine-zipper.

The protein belongs to the bZIP family. ABI5 subfamily. In terms of assembly, DNA-binding heterodimer. Interacts with ABI3 and the AFP proteins AFP1, AFP2, AFP3 and AFP4. As to expression, expressed in roots and flowers.

It is found in the nucleus. Binds to the ABA-responsive element (ABRE). Mediates stress-responsive ABA signaling. The protein is ABSCISIC ACID-INSENSITIVE 5-like protein 6 (ABF3) of Arabidopsis thaliana (Mouse-ear cress).